A 435-amino-acid chain; its full sequence is 4-hydroxy-3-methylbut-2-en-1-yl diphosphate synthase (flavodoxin) (435 aa).

Residues M1–K15 show a composition bias toward basic and acidic residues. A disordered region spans residues M1–R24. 4 residues coordinate [4Fe-4S] cluster: C316, C319, C362, and E369.

This sequence belongs to the IspG family. The cofactor is [4Fe-4S] cluster.

It catalyses the reaction (2E)-4-hydroxy-3-methylbut-2-enyl diphosphate + oxidized [flavodoxin] + H2O + 2 H(+) = 2-C-methyl-D-erythritol 2,4-cyclic diphosphate + reduced [flavodoxin]. Its pathway is isoprenoid biosynthesis; isopentenyl diphosphate biosynthesis via DXP pathway; isopentenyl diphosphate from 1-deoxy-D-xylulose 5-phosphate: step 5/6. Converts 2C-methyl-D-erythritol 2,4-cyclodiphosphate (ME-2,4cPP) into 1-hydroxy-2-methyl-2-(E)-butenyl 4-diphosphate. This is 4-hydroxy-3-methylbut-2-en-1-yl diphosphate synthase (flavodoxin) from Afipia carboxidovorans (strain ATCC 49405 / DSM 1227 / KCTC 32145 / OM5) (Oligotropha carboxidovorans).